A 216-amino-acid polypeptide reads, in one-letter code: Peroxiredoxin (216 aa).

A Thioredoxin domain is found at 2–158 (VVIGEKFPEV…ILRLVKALKI (157 aa)). Catalysis depends on Cys46, which acts as the Cysteine sulfenic acid (-SOH) intermediate. Arg121 is a substrate binding site. The cysteines at positions 205 and 211 are disulfide-linked.

Belongs to the peroxiredoxin family. Prx6 subfamily. Homodecamer. Pentamer of dimers that assemble into a ring structure.

It is found in the cytoplasm. The enzyme catalyses a hydroperoxide + [thioredoxin]-dithiol = an alcohol + [thioredoxin]-disulfide + H2O. Functionally, thiol-specific peroxidase that catalyzes the reduction of hydrogen peroxide and organic hydroperoxides to water and alcohols, respectively. Plays a role in cell protection against oxidative stress by detoxifying peroxides. This Pyrococcus abyssi (strain GE5 / Orsay) protein is Peroxiredoxin.